The following is a 124-amino-acid chain: Small ribosomal subunit protein uS12 (124 aa).

Asp89 carries the 3-methylthioaspartic acid modification.

It belongs to the universal ribosomal protein uS12 family. As to quaternary structure, part of the 30S ribosomal subunit. Contacts proteins S8 and S17. May interact with IF1 in the 30S initiation complex.

In terms of biological role, with S4 and S5 plays an important role in translational accuracy. Interacts with and stabilizes bases of the 16S rRNA that are involved in tRNA selection in the A site and with the mRNA backbone. Located at the interface of the 30S and 50S subunits, it traverses the body of the 30S subunit contacting proteins on the other side and probably holding the rRNA structure together. The combined cluster of proteins S8, S12 and S17 appears to hold together the shoulder and platform of the 30S subunit. This is Small ribosomal subunit protein uS12 from Shewanella sp. (strain ANA-3).